Consider the following 160-residue polypeptide: Protein-export protein SecB (160 aa).

The protein belongs to the SecB family. In terms of assembly, homotetramer, a dimer of dimers. One homotetramer interacts with 1 SecA dimer.

The protein localises to the cytoplasm. Functionally, one of the proteins required for the normal export of preproteins out of the cell cytoplasm. It is a molecular chaperone that binds to a subset of precursor proteins, maintaining them in a translocation-competent state. It also specifically binds to its receptor SecA. In Burkholderia multivorans (strain ATCC 17616 / 249), this protein is Protein-export protein SecB.